We begin with the raw amino-acid sequence, 84 residues long: Delta-thalatoxin-Cad1a (84 aa).

Residues 1-19 (MAYLKIVLVALMLVLAVSA) form the signal peptide. Residues 20 to 33 (MRRPDQQDQDISVA) constitute a propeptide that is removed on maturation. 3 disulfide bridges follow: Cys-38–Cys-78, Cys-40–Cys-68, and Cys-61–Cys-79.

This sequence belongs to the sea anemone sodium channel inhibitory toxin family. Type II subfamily.

It is found in the secreted. The protein resides in the nematocyst. Binds specifically to the voltage-gated sodium channel (Nav) and delays its inactivation. The polypeptide is Delta-thalatoxin-Cad1a (Cryptodendrum adhaesivum (Adhesive sea anemone)).